A 196-amino-acid chain; its full sequence is Peptidyl-tRNA hydrolase (196 aa).

A tRNA-binding site is contributed by Y16. H21 (proton acceptor) is an active-site residue. The tRNA site is built by F67, N69, and N115.

It belongs to the PTH family. In terms of assembly, monomer.

It localises to the cytoplasm. The enzyme catalyses an N-acyl-L-alpha-aminoacyl-tRNA + H2O = an N-acyl-L-amino acid + a tRNA + H(+). Its function is as follows. Hydrolyzes ribosome-free peptidyl-tRNAs (with 1 or more amino acids incorporated), which drop off the ribosome during protein synthesis, or as a result of ribosome stalling. In terms of biological role, catalyzes the release of premature peptidyl moieties from peptidyl-tRNA molecules trapped in stalled 50S ribosomal subunits, and thus maintains levels of free tRNAs and 50S ribosomes. In Edwardsiella ictaluri (strain 93-146), this protein is Peptidyl-tRNA hydrolase.